A 218-amino-acid polypeptide reads, in one-letter code: Ribonuclease HII (218 aa).

The 190-residue stretch at 22–211 (VRIAGVDEAG…VRAALESRFS (190 aa)) folds into the RNase H type-2 domain. A divalent metal cation contacts are provided by Asp-28, Glu-29, and Asp-119.

This sequence belongs to the RNase HII family. Requires Mn(2+) as cofactor. The cofactor is Mg(2+).

It localises to the cytoplasm. It catalyses the reaction Endonucleolytic cleavage to 5'-phosphomonoester.. Its function is as follows. Endonuclease that specifically degrades the RNA of RNA-DNA hybrids. This chain is Ribonuclease HII, found in Maricaulis maris (strain MCS10) (Caulobacter maris).